An 81-amino-acid polypeptide reads, in one-letter code: Photosystem I iron-sulfur center (81 aa).

4Fe-4S ferredoxin-type domains lie at 2-31 (SHSV…MVPW) and 39-68 (IASS…IRVY). 8 residues coordinate [4Fe-4S] cluster: C11, C14, C17, C21, C48, C51, C54, and C58.

The cyanobacterial PSI reaction center is composed of one copy each of PsaA,B,C,D,E,F,I,J,K,L,M and X, and forms trimeric complexes. The cofactor is [4Fe-4S] cluster.

The protein resides in the cellular thylakoid membrane. It catalyses the reaction reduced [plastocyanin] + hnu + oxidized [2Fe-2S]-[ferredoxin] = oxidized [plastocyanin] + reduced [2Fe-2S]-[ferredoxin]. Its function is as follows. Apoprotein for the two 4Fe-4S centers FA and FB of photosystem I (PSI); essential for photochemical activity. FB is the terminal electron acceptor of PSI, donating electrons to ferredoxin. The C-terminus interacts with PsaA/B/D and helps assemble the protein into the PSI complex. Required for binding of PsaD and PsaE to PSI. PSI is a plastocyanin/cytochrome c6-ferredoxin oxidoreductase, converting photonic excitation into a charge separation, which transfers an electron from the donor P700 chlorophyll pair to the spectroscopically characterized acceptors A0, A1, FX, FA and FB in turn. In terms of biological role, mutant proteins with a 3Fe-4S center are unable to reconstitute PSI activity in vivo. The sequence is that of Photosystem I iron-sulfur center from Synechocystis sp. (strain ATCC 27184 / PCC 6803 / Kazusa).